The following is a 149-amino-acid chain: Ribonuclease pancreatic (149 aa).

The first 25 residues, 1-25 (MGLEKSLILFPLFFLLLGWVQPSLG), serve as a signal peptide directing secretion. Residues K32 and R35 each contribute to the substrate site. H37 serves as the catalytic Proton acceptor. Intrachain disulfides connect C51–C109, C65–C120, C83–C135, and C90–C97. Substrate contacts are provided by residues 66-70 (KPVNT) and K91. H144 (proton donor) is an active-site residue.

Belongs to the pancreatic ribonuclease family. Monomer. Interacts with and forms tight 1:1 complexes with RNH1. Dimerization of two such complexes may occur. Interaction with RNH1 inhibits this protein. Pancreas.

Its subcellular location is the secreted. It catalyses the reaction an [RNA] containing cytidine + H2O = an [RNA]-3'-cytidine-3'-phosphate + a 5'-hydroxy-ribonucleotide-3'-[RNA].. The catalysed reaction is an [RNA] containing uridine + H2O = an [RNA]-3'-uridine-3'-phosphate + a 5'-hydroxy-ribonucleotide-3'-[RNA].. Endonuclease that catalyzes the cleavage of RNA on the 3' side of pyrimidine nucleotides. Acts on single-stranded and double-stranded RNA. This chain is Ribonuclease pancreatic (Rnase1), found in Mus musculus (Mouse).